The following is a 294-amino-acid chain: Lipoyl synthase (294 aa).

Residues C38, C43, C49, C64, C68, C71, and S277 each coordinate [4Fe-4S] cluster. In terms of domain architecture, Radical SAM core spans W50–R266.

It belongs to the radical SAM superfamily. Lipoyl synthase family. [4Fe-4S] cluster is required as a cofactor.

It localises to the cytoplasm. It catalyses the reaction [[Fe-S] cluster scaffold protein carrying a second [4Fe-4S](2+) cluster] + N(6)-octanoyl-L-lysyl-[protein] + 2 oxidized [2Fe-2S]-[ferredoxin] + 2 S-adenosyl-L-methionine + 4 H(+) = [[Fe-S] cluster scaffold protein] + N(6)-[(R)-dihydrolipoyl]-L-lysyl-[protein] + 4 Fe(3+) + 2 hydrogen sulfide + 2 5'-deoxyadenosine + 2 L-methionine + 2 reduced [2Fe-2S]-[ferredoxin]. It participates in protein modification; protein lipoylation via endogenous pathway; protein N(6)-(lipoyl)lysine from octanoyl-[acyl-carrier-protein]: step 2/2. Functionally, catalyzes the radical-mediated insertion of two sulfur atoms into the C-6 and C-8 positions of the octanoyl moiety bound to the lipoyl domains of lipoate-dependent enzymes, thereby converting the octanoylated domains into lipoylated derivatives. This is Lipoyl synthase from Pelodictyon phaeoclathratiforme (strain DSM 5477 / BU-1).